Consider the following 166-residue polypeptide: Mitochondrial fission process protein 1 (166 aa).

3 helical membrane-spanning segments follow: residues 33-53 (SLVK…YVAA), 78-98 (AIAA…IPGF), and 125-145 (TVTC…DSFV).

It belongs to the MTFP1 family.

It is found in the mitochondrion inner membrane. Functionally, involved in the mitochondrial division probably by regulating membrane fission. Loss-of-function leads to apoptosis. This Caenorhabditis elegans protein is Mitochondrial fission process protein 1 (mtp-18).